The sequence spans 316 residues: Acetylglutamate kinase (316 aa).

Substrate contacts are provided by residues 65-66 (GG), R87, and N179.

Belongs to the acetylglutamate kinase family. ArgB subfamily.

The protein resides in the cytoplasm. It catalyses the reaction N-acetyl-L-glutamate + ATP = N-acetyl-L-glutamyl 5-phosphate + ADP. It participates in amino-acid biosynthesis; L-arginine biosynthesis; N(2)-acetyl-L-ornithine from L-glutamate: step 2/4. Functionally, catalyzes the ATP-dependent phosphorylation of N-acetyl-L-glutamate. This chain is Acetylglutamate kinase, found in Alkaliphilus metalliredigens (strain QYMF).